The primary structure comprises 505 residues: Probable ribonuclease FAU-1 (505 aa).

Residues 389 to 408 are disordered; the sequence is ISGHGSGTYDELGTPRESGD.

Belongs to the FAU-1 family.

In terms of biological role, probable RNase involved in rRNA stability through maturation and/or degradation of precursor rRNAs. Binds to RNA in loop regions with AU-rich sequences. This is Probable ribonuclease FAU-1 from Haloquadratum walsbyi (strain DSM 16790 / HBSQ001).